We begin with the raw amino-acid sequence, 174 residues long: Co-chaperone protein HscB homolog (174 aa).

One can recognise a J domain in the interval 2 to 74; sequence NYFELFNLPV…IRRAEHMLAL (73 aa).

The protein belongs to the HscB family. Interacts with HscA and stimulates its ATPase activity.

Functionally, co-chaperone involved in the maturation of iron-sulfur cluster-containing proteins. Seems to help targeting proteins to be folded toward HscA. The protein is Co-chaperone protein HscB homolog of Shewanella amazonensis (strain ATCC BAA-1098 / SB2B).